Here is a 183-residue protein sequence, read N- to C-terminus: NADH dehydrogenase [ubiquinone] iron-sulfur protein 4, mitochondrial (183 aa).

The transit peptide at 1–28 (MSALRQVMCRSTASLQLYQANRAAAARW) directs the protein to the mitochondrion. Position 181 is a phosphoserine (S181).

The protein belongs to the complex I NDUFS4 subunit family.

The protein localises to the mitochondrion inner membrane. In terms of biological role, accessory subunit of the mitochondrial membrane respiratory chain NADH dehydrogenase (Complex I), that is believed not to be involved in catalysis. Complex I functions in the transfer of electrons from NADH to the respiratory chain. The immediate electron acceptor for the enzyme is believed to be ubiquinone. This is NADH dehydrogenase [ubiquinone] iron-sulfur protein 4, mitochondrial from Drosophila melanogaster (Fruit fly).